The sequence spans 215 residues: Putative zinc finger protein ORF121 (215 aa).

The segment at 53–105 (CVICMEPTYTKKTLAECDIEGGALRVTTMPCPTHYICDNCIRQEMEDKCPICR) adopts an RING-type; degenerate zinc-finger fold.

In Magallana gigas (Pacific oyster), this protein is Putative zinc finger protein ORF121.